A 185-amino-acid chain; its full sequence is Peptidyl-tRNA hydrolase (185 aa).

Tyrosine 14 contacts tRNA. Histidine 19 (proton acceptor) is an active-site residue. The tRNA site is built by tyrosine 64, asparagine 66, and asparagine 112.

Belongs to the PTH family. As to quaternary structure, monomer.

It is found in the cytoplasm. It catalyses the reaction an N-acyl-L-alpha-aminoacyl-tRNA + H2O = an N-acyl-L-amino acid + a tRNA + H(+). Hydrolyzes ribosome-free peptidyl-tRNAs (with 1 or more amino acids incorporated), which drop off the ribosome during protein synthesis, or as a result of ribosome stalling. Its function is as follows. Catalyzes the release of premature peptidyl moieties from peptidyl-tRNA molecules trapped in stalled 50S ribosomal subunits, and thus maintains levels of free tRNAs and 50S ribosomes. This Lactiplantibacillus plantarum (strain ATCC BAA-793 / NCIMB 8826 / WCFS1) (Lactobacillus plantarum) protein is Peptidyl-tRNA hydrolase.